A 550-amino-acid polypeptide reads, in one-letter code: Arginine--tRNA ligase (550 aa).

The 'HIGH' region motif lies at 123–133; that stretch reads ANPTGYLHIAH.

Belongs to the class-I aminoacyl-tRNA synthetase family. Monomer.

It is found in the cytoplasm. It carries out the reaction tRNA(Arg) + L-arginine + ATP = L-arginyl-tRNA(Arg) + AMP + diphosphate. This chain is Arginine--tRNA ligase, found in Ureaplasma parvum serovar 3 (strain ATCC 27815 / 27 / NCTC 11736).